A 389-amino-acid polypeptide reads, in one-letter code: MLEEPRPRPPPSGLAGLLFLALCSRALSNEILGLKLPGEPPLTANTVCLTLSGLSKRQLGLCLRNPDVTASALQGLHIAVHECQHQLRDQRWNCSALEGGGRLPHHSAILKRGFRESAFSFSMLAAGVMHAVATACSLGKLVSCGCGWKGSGEQDRLRAKLLQLQALSRGKSFPHSLPSPGPGSSPSPGPQDTWEWGGCNHDMDFGEKFSRDFLDSREAPRDIQARMRIHNNRVGRQVVTENLKRKCKCHGTSGSCQFKTCWRAAPEFRAVGAALRERLGRAIFIDTHNRNSGAFQPRLRPRRLSGELVYFEKSPDFCERDPTMGSPGTRGRACNKTSRLLDGCGSLCCGRGHNVLRQTRVERCHCRFHWCCYVLCDECKVTEWVNVCK.

Positions 1-28 (MLEEPRPRPPPSGLAGLLFLALCSRALS) are cleaved as a signal peptide. T46 is subject to Phosphothreonine. 11 disulfide bridges follow: C83/C94, C136/C144, C146/C199, C247/C261, C249/C256, C318/C349, C334/C344, C348/C388, C364/C379, C366/C376, and C371/C372. A glycan (N-linked (GlcNAc...) asparagine) is linked at N93. The disordered stretch occupies residues 171-197 (KSFPHSLPSPGPGSSPSPGPQDTWEWG). Residues 177-189 (LPSPGPGSSPSPG) are compositionally biased toward pro residues. A lipid anchor (O-palmitoleoyl serine; by PORCN) is attached at S253. A glycan (N-linked (GlcNAc...) asparagine) is linked at N335.

The protein belongs to the Wnt family. As to quaternary structure, forms a soluble 1:1 complex with AFM; this prevents oligomerization and is required for prolonged biological activity. The complex with AFM may represent the physiological form in body fluids. Post-translationally, palmitoleoylation is required for efficient binding to frizzled receptors. Depalmitoleoylation leads to Wnt signaling pathway inhibition. Detected in most adult tissues. Highest levels were found in heart and skeletal muscle. Low levels are found in brain.

Its subcellular location is the secreted. The protein resides in the extracellular space. It localises to the extracellular matrix. In terms of biological role, member of the Wnt ligand gene family that encodes for secreted proteins, which activate the Wnt signaling cascade. Specifically activates canonical Wnt/beta-catenin signaling and thus triggers beta-catenin/LEF/TCF-mediated transcriptional programs. Involved in signaling networks controlling stemness, pluripotency and cell fate decisions. Acts in the immune system, mammary gland, adipose tissue, bone and skin. This is Protein Wnt-10b (WNT10B) from Homo sapiens (Human).